The primary structure comprises 208 residues: High frequency lysogenization protein HflD homolog (208 aa).

The protein belongs to the HflD family.

The protein resides in the cytoplasm. It localises to the cell inner membrane. The chain is High frequency lysogenization protein HflD homolog from Yersinia enterocolitica serotype O:8 / biotype 1B (strain NCTC 13174 / 8081).